The sequence spans 75 residues: Tautomerase PptA (75 aa).

The Proton acceptor; via imino nitrogen role is filled by P2.

This sequence belongs to the 4-oxalocrotonate tautomerase family. PptA subfamily. In terms of assembly, homodimer.

Its subcellular location is the cytoplasm. This is Tautomerase PptA from Escherichia coli (strain SMS-3-5 / SECEC).